Here is a 587-residue protein sequence, read N- to C-terminus: Inorganic phosphate transporter 2-1, chloroplastic (587 aa).

The transit peptide at 1–71 (MTLPYRFSSV…VCPLASFSSY (71 aa)) directs the protein to the chloroplast. The disordered stretch occupies residues 74-106 (SEGEEQHHADQPIQNPHESSTVSNESDGKGNAE). Residues 85 to 98 (PIQNPHESSTVSNE) show a composition bias toward polar residues. Helical transmembrane passes span 127–147 (AISI…KSLG), 154–174 (TKLL…NIGA), 195–215 (AVMT…THVT), 233–253 (MLLF…LQVA), 265–285 (CIVG…AVFW), 289–309 (AKVA…SFLV), 327–347 (AAAA…SAAL), 352–372 (IFPI…IVFD), 413–433 (LEIV…FMSF), 465–485 (IVIP…GLTM), 523–543 (LGLP…VGFA), and 559–579 (ASWL…TWIF).

The protein belongs to the inorganic phosphate transporter (PiT) (TC 2.A.20.2) family. In terms of tissue distribution, mostly expressed in young green tissues. Present in both auto- and heterotrophic tissues. Also expressed in root stele.

The protein resides in the plastid. It localises to the chloroplast inner membrane. Its function is as follows. Low affinity H(+)/Pi chloroplastic cotransporter. Involved in inorganic phosphate (orthophosphate, Pi) uptake in green parts of plants in Pi-sufficient conditions. Required for Pi retranslocation during Pi deprivation. The protein is Inorganic phosphate transporter 2-1, chloroplastic (PHT2-1) of Arabidopsis thaliana (Mouse-ear cress).